The sequence spans 267 residues: Syntaxin-72 (267 aa).

The Cytoplasmic segment spans residues 1 to 244 (MPVIDIIFRV…QLVQMRSSRN (244 aa)). Residues 53 to 87 (KAELASTEKNRAAAVAMNAEVRRTKARLAEDVVKL) adopt a coiled-coil conformation. Residues 173–235 (EMRRKKQDEG…KNTNVRLKKQ (63 aa)) enclose the t-SNARE coiled-coil homology domain. Residues 245–265 (FCIDIILLCVILGIVSYIYNA) form a helical; Anchor for type IV membrane protein membrane-spanning segment. At 266–267 (LN) the chain is on the vesicular side.

This sequence belongs to the syntaxin family. In terms of assembly, part of the t-SNARE complex. In terms of tissue distribution, expressed in root, leaf, stem, flower and silique.

The protein localises to the membrane. Functionally, vesicle trafficking protein that functions in the secretory pathway. This chain is Syntaxin-72 (SYP72), found in Arabidopsis thaliana (Mouse-ear cress).